The sequence spans 243 residues: Adenosylcobinamide-GDP ribazoletransferase (243 aa).

5 helical membrane passes run 31-51 (LLWY…AHLL), 61-81 (AAII…DGLA), 109-129 (IAVV…LSLL), 134-154 (GIYL…LLAT), and 188-208 (LLLG…FVWL).

This sequence belongs to the CobS family. Mg(2+) serves as cofactor.

Its subcellular location is the cell inner membrane. The catalysed reaction is alpha-ribazole + adenosylcob(III)inamide-GDP = adenosylcob(III)alamin + GMP + H(+). The enzyme catalyses alpha-ribazole 5'-phosphate + adenosylcob(III)inamide-GDP = adenosylcob(III)alamin 5'-phosphate + GMP + H(+). It participates in cofactor biosynthesis; adenosylcobalamin biosynthesis; adenosylcobalamin from cob(II)yrinate a,c-diamide: step 7/7. Its function is as follows. Joins adenosylcobinamide-GDP and alpha-ribazole to generate adenosylcobalamin (Ado-cobalamin). Also synthesizes adenosylcobalamin 5'-phosphate from adenosylcobinamide-GDP and alpha-ribazole 5'-phosphate. This is Adenosylcobinamide-GDP ribazoletransferase from Ectopseudomonas mendocina (strain ymp) (Pseudomonas mendocina).